Reading from the N-terminus, the 332-residue chain is DNA-directed RNA polymerase subunit alpha (332 aa).

The segment at 1–234 (MTVTANQVLR…DQLSVFGDFT (234 aa)) is alpha N-terminal domain (alpha-NTD). The tract at residues 248 to 332 (VDPVLLRPID…AGVASHGMLG (85 aa)) is alpha C-terminal domain (alpha-CTD).

The protein belongs to the RNA polymerase alpha chain family. In terms of assembly, homodimer. The RNAP catalytic core consists of 2 alpha, 1 beta, 1 beta' and 1 omega subunit. When a sigma factor is associated with the core the holoenzyme is formed, which can initiate transcription.

The enzyme catalyses RNA(n) + a ribonucleoside 5'-triphosphate = RNA(n+1) + diphosphate. Functionally, DNA-dependent RNA polymerase catalyzes the transcription of DNA into RNA using the four ribonucleoside triphosphates as substrates. The protein is DNA-directed RNA polymerase subunit alpha of Stenotrophomonas maltophilia (strain K279a).